The chain runs to 486 residues: Glutamyl-tRNA(Gln) amidotransferase subunit A (486 aa).

Catalysis depends on charge relay system residues K76 and S151. S175 (acyl-ester intermediate) is an active-site residue.

This sequence belongs to the amidase family. GatA subfamily. In terms of assembly, heterotrimer of A, B and C subunits.

It catalyses the reaction L-glutamyl-tRNA(Gln) + L-glutamine + ATP + H2O = L-glutaminyl-tRNA(Gln) + L-glutamate + ADP + phosphate + H(+). Its function is as follows. Allows the formation of correctly charged Gln-tRNA(Gln) through the transamidation of misacylated Glu-tRNA(Gln) in organisms which lack glutaminyl-tRNA synthetase. The reaction takes place in the presence of glutamine and ATP through an activated gamma-phospho-Glu-tRNA(Gln). This Nitrosomonas eutropha (strain DSM 101675 / C91 / Nm57) protein is Glutamyl-tRNA(Gln) amidotransferase subunit A.